The sequence spans 603 residues: Podocalyxin-like protein 2 (603 aa).

The first 28 residues, 1–28 (MARPLRAARLPPPLLLLLAAGASLGAYA), serve as a signal peptide directing secretion. Over 29–499 (VGVDEPGPEG…ATQVRSDYGT (471 aa)) the chain is Extracellular. Residues 53–92 (FEPLDSEEPSEAMGLDAGLAPGSGFPSEDSEESRLLQPPQ) are disordered. O-linked (Xyl...) (chondroitin sulfate) serine glycosylation occurs at S75. Y93 carries the post-translational modification Sulfotyrosine. A glycan (N-linked (GlcNAc...) asparagine) is linked at N101. Sulfotyrosine is present on Y113. Positions 124–368 (SMEDPGQAPD…LEGQAAEAHS (245 aa)) are disordered. The span at 156-187 (QEEEEEEEEEEEEREEEEREKEAEEEEEEEEL) shows a compositional bias: acidic residues. Over residues 196–216 (ATAQAHAPSPSTSSSTSSQSP) the composition is skewed to low complexity. 3 stretches are compositionally biased toward polar residues: residues 240–266 (VKPT…QESG), 302–314 (ALPS…TVPP), and 339–349 (DTESTPSSATW). The N-linked (GlcNAc...) asparagine glycan is linked to N260. N-linked (GlcNAc...) asparagine glycosylation is present at N394. The helical transmembrane segment at 500–520 (LFVVLVIIGVICFIIIVLGLL) threads the bilayer. Over 521 to 603 (YNCWQRRMPK…SDVFEEDTHL (83 aa)) the chain is Cytoplasmic. The segment covering 558–570 (DSQSEMQEKQPSL) has biased composition (polar residues). Positions 558–603 (DSQSEMQEKQPSLNGGAINGPSSWSALMGSKRDPEDSDVFEEDTHL) are disordered. Residues S569 and S594 each carry the phosphoserine modification. The span at 592-603 (EDSDVFEEDTHL) shows a compositional bias: acidic residues.

Belongs to the podocalyxin family. Homodimer; disulfide-linked. Interacts with SELL, SELE and SELP. In terms of processing, glycosylated; contains chondroitin sulfate. Displays sialylated O-linked oligosaccharides. Sulfation is necessary for interaction with SELL. Sialylated O-linked oligosaccharides are necessary for interaction with SELL, SELE and SELP.

Its subcellular location is the membrane. Functionally, acts as a ligand for vascular selectins. Mediates rapid rolling of leukocytes over vascular surfaces through high affinity divalent cation-dependent interactions with E-, P- and L-selectins. In Mus musculus (Mouse), this protein is Podocalyxin-like protein 2 (Podxl2).